Here is a 207-residue protein sequence, read N- to C-terminus: Claudin-11 (207 aa).

A topological domain (cytoplasmic) is located at residue Met-1. Residues 2–22 (VATCLQVVGFVTSFVGWIGVI) form a helical membrane-spanning segment. Residues 23–82 (VTTSTNDWVVTCGYTIPTCRKLDELGSKGLWADCVMATGLYHCKPLVDILILPGYVQACR) lie on the Extracellular side of the membrane. The helical transmembrane segment at 83–103 (ALMIAASVLGLPAILLLLTVL) threads the bilayer. Over 104 to 122 (PCIRMGHEPGVAKYRRAQL) the chain is Cytoplasmic. A helical membrane pass occupies residues 123 to 143 (AGVLLILLALCAIVATIWFPV). Residues 144 to 157 (CAHRETTIVSFGYS) lie on the Extracellular side of the membrane. A helical transmembrane segment spans residues 158 to 178 (LYAGWIGAVLCLVGGCVILCC). Residues 179 to 207 (AGDAQAFGENRFYYSSGSSSPTHAKSAHV) are Cytoplasmic-facing. Ser-193, Ser-194, Ser-197, and Ser-198 each carry phosphoserine.

This sequence belongs to the claudin family. Interacts with tetraspanin-3/TSPAN3. Interacts with OCLN.

Its subcellular location is the cell junction. The protein resides in the tight junction. The protein localises to the cell membrane. Its function is as follows. Plays a major role in tight junction-specific obliteration of the intercellular space, through calcium-independent cell-adhesion activity. This Macaca fascicularis (Crab-eating macaque) protein is Claudin-11 (CLDN11).